The following is a 280-amino-acid chain: Transcription factor HES-1 (280 aa).

The disordered stretch occupies residues 1–44 (MPADIMEKNSSSPVAATPASVNTTPDKPKTASEHRKSSKPIMEK). Over residues 10–21 (SSSPVAATPASV) the composition is skewed to low complexity. Basic and acidic residues predominate over residues 26-35 (DKPKTASEHR). The 58-residue stretch at 34–91 (HRKSSKPIMEKRRRARINESLSQLKTLILDALKKDSSRHSKLEKADILEMTVKHLRNL) folds into the bHLH domain. An Orange domain is found at 110–143 (YRAGFSECMNEVTRFLSTCEGVNTEVRTRLLGHL). 2 disordered regions span residues 157 to 200 (GQPH…PPGG) and 254 to 280 (TSVG…PWRN). Pro residues-rich tracts occupy residues 164–174 (QAPPPPPPGPG) and 181–200 (FAPP…PPGG). Residues 254–271 (TSVGPNAVSPSSGPSLTA) show a composition bias toward polar residues. Residues 275–278 (WRPW) carry the WRPW motif motif.

In terms of assembly, transcription repression requires formation of a complex with a corepressor protein of the Groucho/TLE family. Interacts (via WPRW motif) with TLE1, and more weakly with TLE2. Interacts with HES6. Interacts with SIRT1. Interacts with an FA complex, composed of FANCA, FANCF, FANCG and FANCL, but not of FANCC, nor FANCE. In terms of processing, (Microbial infection) Ubiquitinated via human cytomegalovirus/HCMV protein IE1 that assembles a HES1 ubiquitination complex; leading to HES1 proteasomal degradation.

Its subcellular location is the nucleus. Functionally, transcriptional repressor of genes that require a bHLH protein for their transcription. May act as a negative regulator of myogenesis by inhibiting the functions of MYOD1 and ASH1. Binds DNA on N-box motifs: 5'-CACNAG-3' with high affinity and on E-box motifs: 5'-CANNTG-3' with low affinity. May play a role in a functional FA core complex response to DNA cross-link damage, being required for the stability and nuclear localization of FA core complex proteins, as well as for FANCD2 monoubiquitination in response to DNA damage. This chain is Transcription factor HES-1 (HES1), found in Homo sapiens (Human).